Here is a 221-residue protein sequence, read N- to C-terminus: Thiamine-phosphate synthase (221 aa).

4-amino-2-methyl-5-(diphosphooxymethyl)pyrimidine contacts are provided by residues 39–43 (QLRCK) and Asn76. Mg(2+) contacts are provided by Asp77 and Asp96. A 4-amino-2-methyl-5-(diphosphooxymethyl)pyrimidine-binding site is contributed by Ser114. 140–142 (TPT) contacts 2-[(2R,5Z)-2-carboxy-4-methylthiazol-5(2H)-ylidene]ethyl phosphate. 4-amino-2-methyl-5-(diphosphooxymethyl)pyrimidine is bound at residue Lys143. Gly171 contacts 2-[(2R,5Z)-2-carboxy-4-methylthiazol-5(2H)-ylidene]ethyl phosphate.

It belongs to the thiamine-phosphate synthase family. It depends on Mg(2+) as a cofactor.

It catalyses the reaction 2-[(2R,5Z)-2-carboxy-4-methylthiazol-5(2H)-ylidene]ethyl phosphate + 4-amino-2-methyl-5-(diphosphooxymethyl)pyrimidine + 2 H(+) = thiamine phosphate + CO2 + diphosphate. It carries out the reaction 2-(2-carboxy-4-methylthiazol-5-yl)ethyl phosphate + 4-amino-2-methyl-5-(diphosphooxymethyl)pyrimidine + 2 H(+) = thiamine phosphate + CO2 + diphosphate. The catalysed reaction is 4-methyl-5-(2-phosphooxyethyl)-thiazole + 4-amino-2-methyl-5-(diphosphooxymethyl)pyrimidine + H(+) = thiamine phosphate + diphosphate. Its pathway is cofactor biosynthesis; thiamine diphosphate biosynthesis; thiamine phosphate from 4-amino-2-methyl-5-diphosphomethylpyrimidine and 4-methyl-5-(2-phosphoethyl)-thiazole: step 1/1. Functionally, condenses 4-methyl-5-(beta-hydroxyethyl)thiazole monophosphate (THZ-P) and 2-methyl-4-amino-5-hydroxymethyl pyrimidine pyrophosphate (HMP-PP) to form thiamine monophosphate (TMP). This chain is Thiamine-phosphate synthase, found in Deinococcus geothermalis (strain DSM 11300 / CIP 105573 / AG-3a).